Here is a 601-residue protein sequence, read N- to C-terminus: Elongation factor 4 (601 aa).

The region spanning 7–189 (KNIRNFSIVA…AIVTRLPPPM (183 aa)) is the tr-type G domain. GTP-binding positions include 19 to 24 (DHGKST) and 136 to 139 (NKVD).

The protein belongs to the TRAFAC class translation factor GTPase superfamily. Classic translation factor GTPase family. LepA subfamily.

Its subcellular location is the cell inner membrane. The enzyme catalyses GTP + H2O = GDP + phosphate + H(+). Its function is as follows. Required for accurate and efficient protein synthesis under certain stress conditions. May act as a fidelity factor of the translation reaction, by catalyzing a one-codon backward translocation of tRNAs on improperly translocated ribosomes. Back-translocation proceeds from a post-translocation (POST) complex to a pre-translocation (PRE) complex, thus giving elongation factor G a second chance to translocate the tRNAs correctly. Binds to ribosomes in a GTP-dependent manner. This chain is Elongation factor 4, found in Xanthobacter autotrophicus (strain ATCC BAA-1158 / Py2).